The following is a 648-amino-acid chain: Siderophore transporter MYCGRDRAFT_70577 (648 aa).

Basic and acidic residues-rich tracts occupy residues Met1–Ser11 and Ser29–Ile46. Residues Met1–Ala58 form a disordered region. Over residues Asn47–Ala58 the composition is skewed to polar residues. 11 helical membrane-spanning segments follow: residues Leu79–Gln99, Val151–Ala171, Ala205–Ile225, Trp236–Leu256, Leu303–Ala323, Ile336–Leu356, Thr409–Ile429, Thr438–Asn458, Leu468–Gly488, Val500–Ala520, and Gly578–Met598.

The protein belongs to the major facilitator superfamily.

It localises to the cell membrane. Siderophore transporter; part of the gene cluster 14 that mediates the biosynthesis of a ferrichrome A-like siderophors which may contribute to organismal virulence. The sequence is that of Siderophore transporter MYCGRDRAFT_70577 from Zymoseptoria tritici (strain CBS 115943 / IPO323) (Speckled leaf blotch fungus).